A 423-amino-acid polypeptide reads, in one-letter code: Serine--tRNA ligase (423 aa).

231–233 (TAE) lines the L-serine pocket. Residue 262–264 (RSE) coordinates ATP. Glu285 contributes to the L-serine binding site. 349 to 352 (EISS) provides a ligand contact to ATP. Ser384 provides a ligand contact to L-serine.

This sequence belongs to the class-II aminoacyl-tRNA synthetase family. Type-1 seryl-tRNA synthetase subfamily. In terms of assembly, homodimer. The tRNA molecule binds across the dimer.

It is found in the cytoplasm. It catalyses the reaction tRNA(Ser) + L-serine + ATP = L-seryl-tRNA(Ser) + AMP + diphosphate + H(+). The enzyme catalyses tRNA(Sec) + L-serine + ATP = L-seryl-tRNA(Sec) + AMP + diphosphate + H(+). It participates in aminoacyl-tRNA biosynthesis; selenocysteinyl-tRNA(Sec) biosynthesis; L-seryl-tRNA(Sec) from L-serine and tRNA(Sec): step 1/1. Catalyzes the attachment of serine to tRNA(Ser). Is also able to aminoacylate tRNA(Sec) with serine, to form the misacylated tRNA L-seryl-tRNA(Sec), which will be further converted into selenocysteinyl-tRNA(Sec). This Lactococcus lactis subsp. cremoris (strain MG1363) protein is Serine--tRNA ligase.